Consider the following 258-residue polypeptide: Ribonuclease HII (258 aa).

The region spanning 71–258 (ELIAGIDEVG…PIKSMVNFKY (188 aa)) is the RNase H type-2 domain. Aspartate 77, glutamate 78, and aspartate 169 together coordinate a divalent metal cation.

This sequence belongs to the RNase HII family. Requires Mn(2+) as cofactor. The cofactor is Mg(2+).

It localises to the cytoplasm. The catalysed reaction is Endonucleolytic cleavage to 5'-phosphomonoester.. Functionally, endonuclease that specifically degrades the RNA of RNA-DNA hybrids. This Lactococcus lactis subsp. cremoris (strain SK11) protein is Ribonuclease HII.